A 539-amino-acid chain; its full sequence is Putative cysteine ligase BshC (539 aa).

Residues 249–270 (VETNDEVTNRLNESQAAMKRAG) are a coiled coil.

This sequence belongs to the BshC family.

In terms of biological role, involved in bacillithiol (BSH) biosynthesis. May catalyze the last step of the pathway, the addition of cysteine to glucosamine malate (GlcN-Mal) to generate BSH. This chain is Putative cysteine ligase BshC, found in Bacillus pumilus (strain SAFR-032).